Here is a 442-residue protein sequence, read N- to C-terminus: ATP-dependent RNA helicase SUB2 (442 aa).

The Q motif signature appears at 59–87 (TGFRDFLLKGELLRAITDCGFEHPSEVQQ). Residues 90–265 (IPTAILNVDV…KKFMRNPLEV (176 aa)) form the Helicase ATP-binding domain. 103–110 (AKSGLGKT) contacts ATP. The DECD box motif lies at 212–215 (DECD). The Helicase C-terminal domain occupies 293–438 (KLNELLDSLE…EYPQGGVDSS (146 aa)).

The protein belongs to the DEAD box helicase family. DECD subfamily.

Its subcellular location is the nucleus. It catalyses the reaction ATP + H2O = ADP + phosphate + H(+). In terms of biological role, ATP-binding RNA helicase involved in transcription elongation and required for the export of mRNA out of the nucleus. SUB2 also plays a role in pre-mRNA splicing and spliceosome assembly. May be involved in rDNA and telomeric silencing, and maintenance of genome integrity. The protein is ATP-dependent RNA helicase SUB2 (SUB2) of Ajellomyces capsulatus (strain NAm1 / WU24) (Darling's disease fungus).